Here is a 244-residue protein sequence, read N- to C-terminus: METRILVVNPNSSKSMTVSLRETIEKTFSMESCKISYFTGPDTSPPQIDGQETSIKSMEACLPLLIDDQESVYYFQKFNGILIACFSDHPLVAKIKDRAAKEKADVSIVGLLDSSINYCNLVGKKFSIITSNKEWIPILNNSVESKFLTGNTVNKNLWKGTVSTDLQVLDLHSPENFQQIAEIIYRENIKKLDSDIVILGCAGFSGLQNKLAKTFQRDGTLFLDTIEIGLQILITMIRFVNSQK.

It belongs to the HyuE racemase family.

This is Protein DCG1 (DCG1) from Saccharomyces cerevisiae (strain ATCC 204508 / S288c) (Baker's yeast).